A 213-amino-acid chain; its full sequence is High frequency lysogenization protein HflD homolog (213 aa).

Belongs to the HflD family.

The protein localises to the cytoplasm. Its subcellular location is the cell inner membrane. The chain is High frequency lysogenization protein HflD homolog from Alcanivorax borkumensis (strain ATCC 700651 / DSM 11573 / NCIMB 13689 / SK2).